A 365-amino-acid chain; its full sequence is Casein kinase I homolog hhp1 (365 aa).

Positions 11 to 279 (YRIGRKIGSG…YLRKLFRDLF (269 aa)) constitute a Protein kinase domain. Residues 17–25 (IGSGSFGDI) and Lys-40 contribute to the ATP site. Residue Asp-130 is the Proton acceptor of the active site. A compositionally biased stretch (low complexity) spans 301 to 311 (DQQHQQQLQQQ). A disordered region spans residues 301–365 (DQQHQQQLQQ…TGAQYINRPN (65 aa)). The segment covering 343–365 (INTTVPVINDPSATGAQYINRPN) has biased composition (polar residues).

It belongs to the protein kinase superfamily. CK1 Ser/Thr protein kinase family. Casein kinase I subfamily.

It localises to the nucleus. It carries out the reaction L-seryl-[protein] + ATP = O-phospho-L-seryl-[protein] + ADP + H(+). It catalyses the reaction L-threonyl-[protein] + ATP = O-phospho-L-threonyl-[protein] + ADP + H(+). Functionally, involved in DNA repair. Has a probable role in repairing alkylated DNA and may regulate the activity of protein(s) involved in double strand break repair caused by gamma rays. The chain is Casein kinase I homolog hhp1 (hhp1) from Schizosaccharomyces pombe (strain 972 / ATCC 24843) (Fission yeast).